Reading from the N-terminus, the 391-residue chain is Phosphoglycerate kinase (391 aa).

Substrate-binding positions include 21–23, R36, 59–62, R113, and R146; these read DLN and HLGR. Residues K197, E319, and 345 to 348 each bind ATP; that span reads GGDT.

Belongs to the phosphoglycerate kinase family. Monomer.

Its subcellular location is the cytoplasm. The enzyme catalyses (2R)-3-phosphoglycerate + ATP = (2R)-3-phospho-glyceroyl phosphate + ADP. It participates in carbohydrate degradation; glycolysis; pyruvate from D-glyceraldehyde 3-phosphate: step 2/5. The sequence is that of Phosphoglycerate kinase from Shewanella baltica (strain OS223).